The primary structure comprises 292 residues: Ribosomal protein L11 methyltransferase (292 aa).

The S-adenosyl-L-methionine site is built by Thr-136, Gly-159, Asp-181, and Asn-228.

The protein belongs to the methyltransferase superfamily. PrmA family.

The protein resides in the cytoplasm. It catalyses the reaction L-lysyl-[protein] + 3 S-adenosyl-L-methionine = N(6),N(6),N(6)-trimethyl-L-lysyl-[protein] + 3 S-adenosyl-L-homocysteine + 3 H(+). Functionally, methylates ribosomal protein L11. In Rhizobium leguminosarum bv. trifolii (strain WSM2304), this protein is Ribosomal protein L11 methyltransferase.